The primary structure comprises 72 residues: MSAIFNFQSLLTVILLLICTCAYIRSLTPSLLDKNKTGFLGIFWKCARIGERKSPYVAFCCIVMALTILFSE.

The N-terminal stretch at 1–26 is a signal peptide; the sequence is MSAIFNFQSLLTVILLLICTCAYIRS. Over 27–53 the chain is Extracellular; it reads LTPSLLDKNKTGFLGIFWKCARIGERK. Asparagine 35 carries N-linked (GlcNAc...) asparagine glycosylation. Residues 54–71 form a helical membrane-spanning segment; sequence SPYVAFCCIVMALTILFS. Glutamate 72 is a topological domain (cytoplasmic).

This sequence belongs to the KISH family.

It is found in the golgi apparatus membrane. Involved in the early part of the secretory pathway. This chain is Protein kish-A (tmem167a), found in Danio rerio (Zebrafish).